Reading from the N-terminus, the 239-residue chain is DNA repair protein RecO (239 aa).

It belongs to the RecO family.

Functionally, involved in DNA repair and RecF pathway recombination. In Glaesserella parasuis serovar 5 (strain SH0165) (Haemophilus parasuis), this protein is DNA repair protein RecO.